Here is a 913-residue protein sequence, read N- to C-terminus: SUN domain-containing protein 1 (913 aa).

Residues 1–139 (MDFSRLHTYT…VLRHPVLDES (139 aa)) are LMNA-binding. The Nuclear portion of the chain corresponds to 1–415 (MDFSRLHTYT…LTRCLRNICK (415 aa)). Phosphoserine occurs at positions 48 and 66. A compositionally biased stretch (polar residues) spans 69–81 (SQAIDSHISTSRA). The segment at 69 to 120 (SQAIDSHISTSRATPAKGRETRTVKQRRSASKPAFSINHLSGKGLSSSTSHD) is disordered. The span at 108-120 (LSGKGLSSSTSHD) shows a compositional bias: low complexity. Residue S139 is modified to Phosphoserine. An SYNE2-binding region spans residues 209–302 (SRVYSRDRTL…MTAGELSRVD (94 aa)). The EMD-binding stretch occupies residues 223–302 (VSFYLDRTLW…MTAGELSRVD (80 aa)). Residues 416-436 (VFVLLLPLLLLLGAGVSLWGQ) form a helical membrane-spanning segment. The Perinuclear space segment spans residues 437-913 (GNFFSLLPVL…RFRVHGEPIQ (477 aa)). A disordered region spans residues 456-485 (RVDDSKGMHRPGPLPPSPPPKVDHKASQWP). 2 coiled-coil regions span residues 491–533 (GQKV…EGLS) and 563–638 (HHDH…CEQA). The interval 703–913 (TSEAIVSAVN…RFRVHGEPIQ (211 aa)) is sufficient for interaction with SYNE1 and SYNE2. An SUN domain is found at 751–912 (GGSILSTRCS…YRFRVHGEPI (162 aa)).

Core component of the LINC complex which is composed of inner nuclear membrane SUN domain-containing proteins coupled to outer nuclear membrane KASH domain-containing nesprins. SUN and KASH domain-containing proteins seem to bind each other promiscuously; however, differentially expression of LINC complex constituents is giving rise to specific assemblies. At least SUN1/2-containing core LINC complexes are proposed to be hexameric composed of three protomers of each KASH and SUN domain-containing protein. Interacts with KASH5 (via the last 22 amino acids); this interaction mediates KASH5 telomere localization by forming a SUN1:KASH5 LINC complex. Isoform 5 is proposed to form a non-nuclear spermatogenesis-specific LINC complex with SYNE3 during sperm head formation. Interacts with SYNE2 and SYNE1; probably forming respective LINC complexes. Interacts with A-type lamin with a strong preference for unprocessed A-type lamin compared with the mature protein. Interaction with lamins B1 and C is hardly detectable. Interacts with NAT10. Interacts with EMD and TSNAX. Associates with the nuclear pore complex (NPC). Interacts with CCDC79/TERB1; promoting the accumulation of the LINC complex complexes at the telomere-nuclear envelope attachment sites. Interacts with IRAG2. Interacts (via KASH domain) with TMEM258. The disulfide bond with KASH domain-containing nesprins is required for stability of the respective LINC complexes under tensile forces. Widely expressed. Expressed in cochlear outer hair cells (at protein level). Seven isoforms are expressed in testis including testis-specific isoform 5. Isoform 5 is the only isoform expressed at the end of sperm differentiation. Six isoforms are expressed in muscle, heart and brain, four isoforms in kidney and three isoforms in liver.

It is found in the nucleus inner membrane. Its subcellular location is the cytoplasmic vesicle. It localises to the secretory vesicle. The protein resides in the acrosome outer membrane. Functionally, as a component of the LINC (LInker of Nucleoskeleton and Cytoskeleton) complex involved in the connection between the nuclear lamina and the cytoskeleton. The nucleocytoplasmic interactions established by the LINC complex play an important role in the transmission of mechanical forces across the nuclear envelope and in nuclear movement and positioning. Required for interkinetic nuclear migration (INM) and essential for nucleokinesis and centrosome-nucleus coupling during radial neuronal migration in the cerebral cortex and during glial migration. Involved in telomere attachment to nuclear envelope in the prophase of meiosis implicating a SUN1/2:KASH5 LINC complex in which SUN1 and SUN2 seem to act at least partial redundantly. Required for gametogenesis and involved in selective gene expression of coding and non-coding RNAs needed for gametogenesis. Helps to define the distribution of nuclear pore complexes (NPCs). Required for efficient localization of SYNE4 in the nuclear envelope. May be involved in nuclear remodeling during sperm head formation in spermatogenesis. May play a role in DNA repair by suppressing non-homologous end joining repair to facilitate the repair of DNA cross-links. Isoform 5 may be involved in nuclear remodeling during sperm head formation in spermatogenesis. A probable SUN1 isoform 5:SYNE3 LINC complex may tether spermatid nuclei to anterior cytoskeletal structures such as actin filaments present at membraneous junctions of spermatids and Sertoli cells. The chain is SUN domain-containing protein 1 from Mus musculus (Mouse).